A 54-amino-acid polypeptide reads, in one-letter code: Large ribosomal subunit protein bL32 (54 aa).

Belongs to the bacterial ribosomal protein bL32 family.

This chain is Large ribosomal subunit protein bL32, found in Buchnera aphidicola subsp. Baizongia pistaciae (strain Bp).